We begin with the raw amino-acid sequence, 96 residues long: ATP synthase subunit c (96 aa).

Helical transmembrane passes span 28 to 50 (LGAGVAMGIGAIGPGVGEGNIGA) and 75 to 95 (AVTESTGLYSLVVALILLFVL).

Belongs to the ATPase C chain family. F-type ATPases have 2 components, F(1) - the catalytic core - and F(0) - the membrane proton channel. F(1) has five subunits: alpha(3), beta(3), gamma(1), delta(1), epsilon(1). F(0) has three main subunits: a(1), b(2) and c(10-14). The alpha and beta chains form an alternating ring which encloses part of the gamma chain. F(1) is attached to F(0) by a central stalk formed by the gamma and epsilon chains, while a peripheral stalk is formed by the delta and b chains.

It localises to the cell inner membrane. F(1)F(0) ATP synthase produces ATP from ADP in the presence of a proton or sodium gradient. F-type ATPases consist of two structural domains, F(1) containing the extramembraneous catalytic core and F(0) containing the membrane proton channel, linked together by a central stalk and a peripheral stalk. During catalysis, ATP synthesis in the catalytic domain of F(1) is coupled via a rotary mechanism of the central stalk subunits to proton translocation. Its function is as follows. Key component of the F(0) channel; it plays a direct role in translocation across the membrane. A homomeric c-ring of between 10-14 subunits forms the central stalk rotor element with the F(1) delta and epsilon subunits. This Petrotoga mobilis (strain DSM 10674 / SJ95) protein is ATP synthase subunit c.